Reading from the N-terminus, the 437-residue chain is Phosphomethylpyrimidine synthase (437 aa).

Substrate-binding positions include Asn69, Met98, Tyr127, His163, 185–187 (SRG), 226–229 (DACR), and Glu265. His269 lines the Zn(2+) pocket. Tyr292 serves as a coordination point for substrate. His333 lines the Zn(2+) pocket. 3 residues coordinate [4Fe-4S] cluster: Cys409, Cys412, and Cys416.

It belongs to the ThiC family. It depends on [4Fe-4S] cluster as a cofactor.

It carries out the reaction 5-amino-1-(5-phospho-beta-D-ribosyl)imidazole + S-adenosyl-L-methionine = 4-amino-2-methyl-5-(phosphooxymethyl)pyrimidine + CO + 5'-deoxyadenosine + formate + L-methionine + 3 H(+). It functions in the pathway cofactor biosynthesis; thiamine diphosphate biosynthesis. Catalyzes the synthesis of the hydroxymethylpyrimidine phosphate (HMP-P) moiety of thiamine from aminoimidazole ribotide (AIR) in a radical S-adenosyl-L-methionine (SAM)-dependent reaction. In Clostridium botulinum (strain Loch Maree / Type A3), this protein is Phosphomethylpyrimidine synthase.